A 169-amino-acid chain; its full sequence is Crossover junction endodeoxyribonuclease RuvC (169 aa).

Active-site residues include aspartate 11, glutamate 71, and histidine 143. Mg(2+) contacts are provided by aspartate 11, glutamate 71, and histidine 143.

This sequence belongs to the RuvC family. Homodimer which binds Holliday junction (HJ) DNA. The HJ becomes 2-fold symmetrical on binding to RuvC with unstacked arms; it has a different conformation from HJ DNA in complex with RuvA. In the full resolvosome a probable DNA-RuvA(4)-RuvB(12)-RuvC(2) complex forms which resolves the HJ. Requires Mg(2+) as cofactor.

The protein localises to the cytoplasm. The enzyme catalyses Endonucleolytic cleavage at a junction such as a reciprocal single-stranded crossover between two homologous DNA duplexes (Holliday junction).. Functionally, the RuvA-RuvB-RuvC complex processes Holliday junction (HJ) DNA during genetic recombination and DNA repair. Endonuclease that resolves HJ intermediates. Cleaves cruciform DNA by making single-stranded nicks across the HJ at symmetrical positions within the homologous arms, yielding a 5'-phosphate and a 3'-hydroxyl group; requires a central core of homology in the junction. The consensus cleavage sequence is 5'-(A/T)TT(C/G)-3'. Cleavage occurs on the 3'-side of the TT dinucleotide at the point of strand exchange. HJ branch migration catalyzed by RuvA-RuvB allows RuvC to scan DNA until it finds its consensus sequence, where it cleaves and resolves the cruciform DNA. The sequence is that of Crossover junction endodeoxyribonuclease RuvC from Mesorhizobium japonicum (strain LMG 29417 / CECT 9101 / MAFF 303099) (Mesorhizobium loti (strain MAFF 303099)).